The sequence spans 165 residues: Histone H1 (165 aa).

Positions 1-165 (GKQSTSKSVT…KKATKGSKKN (165 aa)) are disordered. A compositionally biased stretch (basic and acidic residues) spans 9–18 (VTREKKDVKK). Over residues 20–31 (VAPKKAIKKVTK) the composition is skewed to basic residues. Residues 32-41 (KSTTPVKTSK) are compositionally biased toward low complexity. 2 positions are modified to phosphothreonine: threonine 48 and threonine 54. The span at 68–89 (TMKESVSDAKKTVHKSAGDKKL) shows a compositional bias: basic and acidic residues. At serine 83 the chain carries Phosphoserine. A compositionally biased stretch (basic residues) spans 103–117 (KIVHPAKKAAAKPKT). Residue threonine 117 is modified to Phosphothreonine. Residues 118–157 (AKKEVKKDTKPVKKDAKKDTKPVKKDAKKDTKPAKKDTKK) show a composition bias toward basic and acidic residues.

Cell-growth/division-associated phosphorylation by a CDC2-like kinase. Is additionally phosphorylated on either Ser-33, Thr-34 or Thr-35, and on either Thr-39 or Ser-40.

The protein resides in the nucleus. It localises to the chromosome. In terms of biological role, histones H1 are necessary for the condensation of nucleosome chains into higher-order structures. The sequence is that of Histone H1 (HHO) from Tetrahymena pyriformis.